Reading from the N-terminus, the 410-residue chain is Peptidase T (410 aa).

Residue His79 participates in Zn(2+) binding. Residue Asp81 is part of the active site. Residue Asp142 participates in Zn(2+) binding. Glu176 (proton acceptor) is an active-site residue. Zn(2+)-binding residues include Glu177, Asp199, and His381.

Belongs to the peptidase M20B family. Zn(2+) is required as a cofactor.

The protein resides in the cytoplasm. The catalysed reaction is Release of the N-terminal residue from a tripeptide.. Functionally, cleaves the N-terminal amino acid of tripeptides. This Bacillus subtilis (strain 168) protein is Peptidase T (pepT).